The sequence spans 300 residues: N-acetylmuramic acid 6-phosphate etherase 1 (300 aa).

One can recognise an SIS domain in the interval 59–222 (AAERFKKGGR…STGIMVKVGN (164 aa)). Glu-87 serves as the catalytic Proton donor. Residue Glu-118 is part of the active site.

It belongs to the GCKR-like family. MurNAc-6-P etherase subfamily. In terms of assembly, homodimer.

It catalyses the reaction N-acetyl-D-muramate 6-phosphate + H2O = N-acetyl-D-glucosamine 6-phosphate + (R)-lactate. It functions in the pathway amino-sugar metabolism; N-acetylmuramate degradation. Specifically catalyzes the cleavage of the D-lactyl ether substituent of MurNAc 6-phosphate, producing GlcNAc 6-phosphate and D-lactate. This chain is N-acetylmuramic acid 6-phosphate etherase 1, found in Enterococcus faecalis (strain ATCC 700802 / V583).